Consider the following 736-residue polypeptide: Catalase-peroxidase (736 aa).

The signal sequence occupies residues 1-21; the sequence is MFKKTILSFVISAVMVTAASA. The segment at residues 102 to 224 is a cross-link (tryptophyl-tyrosyl-methioninium (Trp-Tyr) (with M-250)); it reads WHAAGTYRTH…LAAVEMGLIY (123 aa). The active-site Proton acceptor is H103. Positions 224-250 form a cross-link, tryptophyl-tyrosyl-methioninium (Tyr-Met) (with W-102); it reads YVNPVGPHGNPDPLLAANDIRMSFGRM. H265 is a heme b binding site.

Belongs to the peroxidase family. Peroxidase/catalase subfamily. As to quaternary structure, homodimer or homotetramer. It depends on heme b as a cofactor. Post-translationally, formation of the three residue Trp-Tyr-Met cross-link is important for the catalase, but not the peroxidase activity of the enzyme.

The enzyme catalyses H2O2 + AH2 = A + 2 H2O. The catalysed reaction is 2 H2O2 = O2 + 2 H2O. In terms of biological role, bifunctional enzyme with both catalase and broad-spectrum peroxidase activity. The sequence is that of Catalase-peroxidase from Shewanella woodyi (strain ATCC 51908 / MS32).